Consider the following 465-residue polypeptide: 28S rRNA (cytosine-C(5))-methyltransferase (465 aa).

Residue glycine 2 is modified to N-acetylglycine. Position 167 is a phosphoserine (serine 167). S-adenosyl-L-methionine contacts are provided by residues 234-240 (CAAPGNK), aspartate 258, arginine 263, and aspartate 305. The Nucleophile role is filled by cysteine 359. The tract at residues 430 to 465 (TPAPQTDAMDPEPLSQVPKRKRRRKAAVGASMQPST) is disordered.

It belongs to the class I-like SAM-binding methyltransferase superfamily. RsmB/NOP family. As to expression, in the hippocampus, specifically expressed in adult hippocampal NG2-positive oligodendrocyte precursor cells (at protein level).

Its subcellular location is the nucleus. It is found in the nucleolus. The enzyme catalyses a cytidine in 28S rRNA + S-adenosyl-L-methionine = a 5-methylcytidine in 28S rRNA + S-adenosyl-L-homocysteine + H(+). S-adenosyl-L-methionine-dependent methyltransferase that specifically methylates the C(5) position of cytosine 3438 (m5C3438) in 28S rRNA. m5C3782 promotes protein translation without affecting ribosome biogenesis and fidelity. Required for corpus callosum and cerebral cortex development. The sequence is that of 28S rRNA (cytosine-C(5))-methyltransferase from Mus musculus (Mouse).